We begin with the raw amino-acid sequence, 321 residues long: Ribosomal RNA small subunit methyltransferase H (321 aa).

Residues 33-35 (AGH), D58, F85, D111, and Q118 each bind S-adenosyl-L-methionine.

This sequence belongs to the methyltransferase superfamily. RsmH family.

It is found in the cytoplasm. The enzyme catalyses cytidine(1402) in 16S rRNA + S-adenosyl-L-methionine = N(4)-methylcytidine(1402) in 16S rRNA + S-adenosyl-L-homocysteine + H(+). Functionally, specifically methylates the N4 position of cytidine in position 1402 (C1402) of 16S rRNA. This chain is Ribosomal RNA small subunit methyltransferase H, found in Chloroherpeton thalassium (strain ATCC 35110 / GB-78).